The sequence spans 319 residues: Malate dehydrogenase (319 aa).

Residues 7 to 13 (GAAGGIG) and D34 each bind NAD(+). Residues R81 and R87 each coordinate substrate. NAD(+) contacts are provided by residues N94 and 117-119 (ITN). Residues N119 and R153 each coordinate substrate. H177 functions as the Proton acceptor in the catalytic mechanism. M227 serves as a coordination point for NAD(+).

Belongs to the LDH/MDH superfamily. MDH type 1 family. In terms of assembly, homodimer.

It catalyses the reaction (S)-malate + NAD(+) = oxaloacetate + NADH + H(+). In terms of biological role, catalyzes the reversible oxidation of malate to oxaloacetate. The chain is Malate dehydrogenase from Psychromonas ingrahamii (strain DSM 17664 / CCUG 51855 / 37).